We begin with the raw amino-acid sequence, 109 residues long: Nucleoid-associated protein NT01EI_1109 (109 aa).

The interval 89–109 is disordered; sequence KERMASVSSGMQLPPGFKMPF.

This sequence belongs to the YbaB/EbfC family. Homodimer.

The protein resides in the cytoplasm. It is found in the nucleoid. Its function is as follows. Binds to DNA and alters its conformation. May be involved in regulation of gene expression, nucleoid organization and DNA protection. This is Nucleoid-associated protein NT01EI_1109 from Edwardsiella ictaluri (strain 93-146).